The following is a 449-amino-acid chain: Tubulin alpha-1C chain (449 aa).

The MREC motif signature appears at 1–4; it reads MREC. Residue Gln-11 participates in GTP binding. The residue at position 40 (Lys-40) is an N6-acetyllysine. Glu-71, Ser-140, Gly-144, Thr-145, Thr-179, Asn-206, and Asn-228 together coordinate GTP. Glu-71 lines the Mg(2+) pocket. The active site involves Glu-254. A 3'-nitrotyrosine modification is found at Tyr-282. Positions 429 to 449 are disordered; it reads EKDYEEVGADSAEGDDEGDEY. A compositionally biased stretch (acidic residues) spans 431–449; the sequence is DYEEVGADSAEGDDEGDEY. Tyr-432 is subject to Phosphotyrosine. Ser-439 is subject to Phosphoserine. Tyr-449 carries the 3'-nitrotyrosine modification.

The protein belongs to the tubulin family. In terms of assembly, dimer of alpha and beta chains. A typical microtubule is a hollow water-filled tube with an outer diameter of 25 nm and an inner diameter of 15 nM. Alpha-beta heterodimers associate head-to-tail to form protofilaments running lengthwise along the microtubule wall with the beta-tubulin subunit facing the microtubule plus end conferring a structural polarity. Microtubules usually have 13 protofilaments but different protofilament numbers can be found in some organisms and specialized cells. The cofactor is Mg(2+). Some glutamate residues at the C-terminus are polyglycylated, resulting in polyglycine chains on the gamma-carboxyl group. Glycylation is mainly limited to tubulin incorporated into axonemes (cilia and flagella) whereas glutamylation is prevalent in neuronal cells, centrioles, axonemes, and the mitotic spindle. Both modifications can coexist on the same protein on adjacent residues, and lowering polyglycylation levels increases polyglutamylation, and reciprocally. Cilia and flagella glycylation is required for their stability and maintenance. Flagella glycylation controls sperm motility. In terms of processing, some glutamate residues at the C-terminus are polyglutamylated, resulting in polyglutamate chains on the gamma-carboxyl group. Polyglutamylation plays a key role in microtubule severing by spastin (SPAST). SPAST preferentially recognizes and acts on microtubules decorated with short polyglutamate tails: severing activity by SPAST increases as the number of glutamates per tubulin rises from one to eight, but decreases beyond this glutamylation threshold. Glutamylation is also involved in cilia motility. Post-translationally, acetylation of alpha chains at Lys-40 is located inside the microtubule lumen. This modification has been correlated with increased microtubule stability, intracellular transport and ciliary assembly. Methylation of alpha chains at Lys-40 is found in mitotic microtubules and is required for normal mitosis and cytokinesis contributing to genomic stability. In terms of processing, nitration of Tyr-449 is irreversible and interferes with normal dynein intracellular distribution. Post-translationally, undergoes a tyrosination/detyrosination cycle, the cyclic removal and re-addition of a C-terminal tyrosine residue by the enzymes tubulin tyrosine carboxypeptidase (MATCAP1, VASH1 or VASH2) and tubulin tyrosine ligase (TTL), respectively. Tyrosination promotes microtubule interaction with CAP-Gly domain-containing proteins such as CLIP1, CLIP2 and DCTN1. Tyrosination regulates the initiation of dynein-dynactin motility via interaction with DCTN1, which brings the dynein-dynactin complex into contact with microtubules. In neurons, tyrosinated tubulins mediate the initiation of retrograde vesicle transport. In terms of processing, detyrosination is involved in metaphase plate congression by guiding chromosomes during mitosis: detyrosination promotes interaction with CENPE, promoting pole-proximal transport of chromosomes toward the equator. Detyrosination increases microtubules-dependent mechanotransduction in dystrophic cardiac and skeletal muscle. In cardiomyocytes, detyrosinated microtubules are required to resist to contractile compression during contraction: detyrosination promotes association with desmin (DES) at force-generating sarcomeres, leading to buckled microtubules and mechanical resistance to contraction.

The protein localises to the cytoplasm. It is found in the cytoskeleton. It catalyses the reaction GTP + H2O = GDP + phosphate + H(+). In terms of biological role, tubulin is the major constituent of microtubules, a cylinder consisting of laterally associated linear protofilaments composed of alpha- and beta-tubulin heterodimers. Microtubules grow by the addition of GTP-tubulin dimers to the microtubule end, where a stabilizing cap forms. Below the cap, tubulin dimers are in GDP-bound state, owing to GTPase activity of alpha-tubulin. This chain is Tubulin alpha-1C chain (TUBA1C), found in Bos taurus (Bovine).